The primary structure comprises 105 residues: Large ribosomal subunit protein uL24 (105 aa).

This sequence belongs to the universal ribosomal protein uL24 family. In terms of assembly, part of the 50S ribosomal subunit.

Functionally, one of two assembly initiator proteins, it binds directly to the 5'-end of the 23S rRNA, where it nucleates assembly of the 50S subunit. Its function is as follows. One of the proteins that surrounds the polypeptide exit tunnel on the outside of the subunit. This chain is Large ribosomal subunit protein uL24, found in Azoarcus sp. (strain BH72).